We begin with the raw amino-acid sequence, 1266 residues long: 5-oxoprolinase 1 (1266 aa).

This sequence belongs to the oxoprolinase family. As to expression, expressed in roots, stems, leaves, flowers and siliques.

It localises to the cytoplasm. It catalyses the reaction 5-oxo-L-proline + ATP + 2 H2O = L-glutamate + ADP + phosphate + H(+). In terms of biological role, catalyzes the cleavage of 5-oxo-L-proline to form L-glutamate coupled to the hydrolysis of ATP to ADP and inorganic phosphate. Acts in the glutathione degradation pathway. The protein is 5-oxoprolinase 1 of Arabidopsis thaliana (Mouse-ear cress).